Consider the following 104-residue polypeptide: Pyrimidine/purine nucleoside phosphorylase (104 aa).

This sequence belongs to the nucleoside phosphorylase PpnP family.

The catalysed reaction is a purine D-ribonucleoside + phosphate = a purine nucleobase + alpha-D-ribose 1-phosphate. The enzyme catalyses adenosine + phosphate = alpha-D-ribose 1-phosphate + adenine. It catalyses the reaction cytidine + phosphate = cytosine + alpha-D-ribose 1-phosphate. It carries out the reaction guanosine + phosphate = alpha-D-ribose 1-phosphate + guanine. The catalysed reaction is inosine + phosphate = alpha-D-ribose 1-phosphate + hypoxanthine. The enzyme catalyses thymidine + phosphate = 2-deoxy-alpha-D-ribose 1-phosphate + thymine. It catalyses the reaction uridine + phosphate = alpha-D-ribose 1-phosphate + uracil. It carries out the reaction xanthosine + phosphate = alpha-D-ribose 1-phosphate + xanthine. In terms of biological role, catalyzes the phosphorolysis of diverse nucleosides, yielding D-ribose 1-phosphate and the respective free bases. Can use uridine, adenosine, guanosine, cytidine, thymidine, inosine and xanthosine as substrates. Also catalyzes the reverse reactions. The polypeptide is Pyrimidine/purine nucleoside phosphorylase (Syntrophotalea carbinolica (strain DSM 2380 / NBRC 103641 / GraBd1) (Pelobacter carbinolicus)).